Reading from the N-terminus, the 175-residue chain is Shikimate kinase (175 aa).

14-19 (GAGKST) contacts ATP. Serine 18 is a binding site for Mg(2+). Substrate is bound by residues aspartate 36, arginine 60, and glycine 82. Arginine 120 contributes to the ATP binding site. Residue arginine 140 coordinates substrate. An ATP-binding site is contributed by glutamine 157.

The protein belongs to the shikimate kinase family. In terms of assembly, monomer. Requires Mg(2+) as cofactor.

Its subcellular location is the cytoplasm. It carries out the reaction shikimate + ATP = 3-phosphoshikimate + ADP + H(+). The protein operates within metabolic intermediate biosynthesis; chorismate biosynthesis; chorismate from D-erythrose 4-phosphate and phosphoenolpyruvate: step 5/7. Its function is as follows. Catalyzes the specific phosphorylation of the 3-hydroxyl group of shikimic acid using ATP as a cosubstrate. This is Shikimate kinase from Mannheimia succiniciproducens (strain KCTC 0769BP / MBEL55E).